The following is a 350-amino-acid chain: Nicotinate-nucleotide--dimethylbenzimidazole phosphoribosyltransferase (350 aa).

Glu-316 functions as the Proton acceptor in the catalytic mechanism.

It belongs to the CobT family.

The enzyme catalyses 5,6-dimethylbenzimidazole + nicotinate beta-D-ribonucleotide = alpha-ribazole 5'-phosphate + nicotinate + H(+). It functions in the pathway nucleoside biosynthesis; alpha-ribazole biosynthesis; alpha-ribazole from 5,6-dimethylbenzimidazole: step 1/2. Catalyzes the synthesis of alpha-ribazole-5'-phosphate from nicotinate mononucleotide (NAMN) and 5,6-dimethylbenzimidazole (DMB). The sequence is that of Nicotinate-nucleotide--dimethylbenzimidazole phosphoribosyltransferase from Pseudomonas syringae pv. tomato (strain ATCC BAA-871 / DC3000).